A 440-amino-acid polypeptide reads, in one-letter code: Ribosomal protein uS12 methylthiotransferase RimO (440 aa).

One can recognise an MTTase N-terminal domain in the interval 7-117 (PKISFVSLGC…VLDAVHRALP (111 aa)). Cys-16, Cys-52, Cys-81, Cys-148, Cys-152, and Cys-155 together coordinate [4Fe-4S] cluster. The region spanning 134–370 (LTPRHYAYLK…MARQQKISAQ (237 aa)) is the Radical SAM core domain. The TRAM domain occupies 373-439 (KRKVGTRQQV…EYDLHGSVAG (67 aa)).

Belongs to the methylthiotransferase family. RimO subfamily. The cofactor is [4Fe-4S] cluster.

The protein resides in the cytoplasm. The catalysed reaction is L-aspartate(89)-[ribosomal protein uS12]-hydrogen + (sulfur carrier)-SH + AH2 + 2 S-adenosyl-L-methionine = 3-methylsulfanyl-L-aspartate(89)-[ribosomal protein uS12]-hydrogen + (sulfur carrier)-H + 5'-deoxyadenosine + L-methionine + A + S-adenosyl-L-homocysteine + 2 H(+). Its function is as follows. Catalyzes the methylthiolation of an aspartic acid residue of ribosomal protein uS12. This Afipia carboxidovorans (strain ATCC 49405 / DSM 1227 / KCTC 32145 / OM5) (Oligotropha carboxidovorans) protein is Ribosomal protein uS12 methylthiotransferase RimO.